Consider the following 97-residue polypeptide: YcgL domain-containing protein PST_1364 (97 aa).

In terms of domain architecture, YcgL spans 3-87 (LICSIYKSPR…AEDEYIEHLP (85 aa)).

The polypeptide is YcgL domain-containing protein PST_1364 (Stutzerimonas stutzeri (strain A1501) (Pseudomonas stutzeri)).